The chain runs to 1651 residues: Roundabout homolog 1 (1651 aa).

The signal sequence occupies residues 1–25 (MKWKHVPFLVMISLLSLSPNHLFLA). At 26 to 897 (QLIPDPEDVE…QQISDVVKQP (872 aa)) the chain is on the extracellular side. Residues 33–57 (DVERGNDHGTPIPTSDNDDNSLGYT) form a disordered region. Polar residues predominate over residues 44–56 (IPTSDNDDNSLGY). 5 Ig-like C2-type domains span residues 68 to 164 (PRIV…ASLE), 170 to 257 (DDFR…AELT), 262 to 346 (PSFV…ATLT), 351 to 446 (PHFV…LEVT), and 455 to 541 (PVIR…AYIE). Residues Cys89 and Cys147 are joined by a disulfide bond. Asn160 carries an N-linked (GlcNAc...) asparagine glycan. Disulfide bonds link Cys191–Cys240, Cys283–Cys330, and Cys372–Cys428. N-linked (GlcNAc...) asparagine glycosylation is present at Asn463. The cysteines at positions 476 and 525 are disulfide-linked. 3 consecutive Fibronectin type-III domains span residues 563–657 (APSK…TQDV), 676–773 (AVLH…TLEE), and 778–874 (PPQG…LDAH). Asn790, Asn820, and Asn827 each carry an N-linked (GlcNAc...) asparagine glycan. The chain crosses the membrane as a helical span at residues 898–918 (AFIAGIGAACWIILMVFSIWL). Over 919-1651 (YRHRKKRNGL…NNEELEETES (733 aa)) the chain is Cytoplasmic. Position 940 is a phosphoserine (Ser940). A Phosphothreonine modification is found at Thr948. Tyr1038 carries the phosphotyrosine; by ABL; in vitro modification. Phosphoserine is present on Ser1055. Residues Tyr1073 and Tyr1114 each carry the phosphotyrosine; by ABL; in vitro modification. Disordered stretches follow at residues 1124–1202 (KDYR…SEEY), 1224–1337 (YLQQ…ADME), 1352–1397 (EQTP…DGSF), and 1420–1651 (RRQM…ETES). Polar residues predominate over residues 1137-1146 (PYNQSYDQNT). Over residues 1147-1163 (GGSYNSSDRGSSTSGSQ) the composition is skewed to low complexity. The segment covering 1186–1196 (LPPPPAHPPPH) has biased composition (pro residues). Thr1240 is modified (phosphothreonine). Residues 1255-1269 (YSHQSTATLTPSPQE) are compositionally biased toward polar residues. Positions 1281-1293 (ETGHMQHQPDRRR) are enriched in basic and acidic residues. Residues 1296-1307 (VSPPPPPRPISP) are compositionally biased toward pro residues. Position 1297 is a phosphoserine (Ser1297). Positions 1322-1336 (MDTDAPEEEEDEADM) are enriched in acidic residues. Over residues 1384 to 1397 (SSGRSSVSSSDGSF) the composition is skewed to low complexity. Positions 1438-1451 (PRPTSPVSTDSNMS) are enriched in polar residues. Residues 1459–1470 (RPAKKLKHQPGH) are compositionally biased toward basic residues. Positions 1480-1490 (LPPPPVPPPAI) are enriched in pro residues. 2 stretches are compositionally biased toward basic and acidic residues: residues 1516–1541 (ARTD…RQVV) and 1549–1573 (DPRE…RDLP). The span at 1592–1601 (FPTSNNPRDP) shows a compositional bias: polar residues. The segment covering 1602 to 1614 (SSSSSMSSRGSGS) has biased composition (low complexity). A compositionally biased stretch (acidic residues) spans 1642-1651 (NNEELEETES).

It belongs to the immunoglobulin superfamily. ROBO family. Homodimer. Dimerization is mediated by the extracellular domain and is independent of SLIT liganding. Interacts with SLIT1. Interacts with SLIT2. Interacts with FLRT3. Interacts with MYO9B (via Rho-GAP domain). In terms of processing, ubiquitinated. May be deubiquitinated by USP33. As to expression, widely expressed, with exception of kidney.

It localises to the cell membrane. Its subcellular location is the cell projection. It is found in the axon. The protein resides in the endoplasmic reticulum-Golgi intermediate compartment membrane. Functionally, receptor for SLIT1 and SLIT2 that mediates cellular responses to molecular guidance cues in cellular migration, including axonal navigation at the ventral midline of the neural tube and projection of axons to different regions during neuronal development. Interaction with the intracellular domain of FLRT3 mediates axon attraction towards cells expressing NTN1. In axon growth cones, the silencing of the attractive effect of NTN1 by SLIT2 may require the formation of a ROBO1-DCC complex. Plays a role in the regulation of cell migration via its interaction with MYO9B; inhibits MYO9B-mediated stimulation of RHOA GTPase activity, and thereby leads to increased levels of active, GTP-bound RHOA. May be required for lung development. In Homo sapiens (Human), this protein is Roundabout homolog 1 (ROBO1).